The chain runs to 202 residues: Cyclin-U4-1 (202 aa).

Belongs to the cyclin family. Cyclin U/P subfamily. In terms of assembly, interacts with CDKA-1. In terms of tissue distribution, expressed in roots, stems and flowers. Expressed in the shoot apex, leaf primordia and young leaves.

This chain is Cyclin-U4-1 (CYCU4-1), found in Arabidopsis thaliana (Mouse-ear cress).